Consider the following 150-residue polypeptide: 3-dehydroquinate dehydratase (150 aa).

Tyr-26 functions as the Proton acceptor in the catalytic mechanism. Substrate contacts are provided by Asn-77, His-83, and Asp-90. His-103 serves as the catalytic Proton donor. Residues 104 to 105 (LS) and Arg-114 contribute to the substrate site.

It belongs to the type-II 3-dehydroquinase family. As to quaternary structure, homododecamer.

The catalysed reaction is 3-dehydroquinate = 3-dehydroshikimate + H2O. It participates in metabolic intermediate biosynthesis; chorismate biosynthesis; chorismate from D-erythrose 4-phosphate and phosphoenolpyruvate: step 3/7. Functionally, catalyzes a trans-dehydration via an enolate intermediate. This Vibrio cholerae serotype O1 (strain ATCC 39541 / Classical Ogawa 395 / O395) protein is 3-dehydroquinate dehydratase.